The chain runs to 887 residues: UPF0182 protein CTC_00086 (887 aa).

7 helical membrane passes run 9-29 (FIAI…SFII), 47-67 (FFTI…SIWL), 87-107 (LMIA…SSKY), 146-166 (VLIL…YFII), 195-215 (GKQL…GYII), 242-262 (IYRI…ISII), and 266-286 (IKPI…EGAT).

This sequence belongs to the UPF0182 family.

The protein resides in the cell membrane. The protein is UPF0182 protein CTC_00086 of Clostridium tetani (strain Massachusetts / E88).